The following is a 107-amino-acid chain: Protamine-2 (107 aa).

The segment at methionine 1–arginine 94 is disordered. Phosphoserine occurs at positions 8, 10, and 33. Basic residues predominate over residues threonine 43–arginine 94.

It belongs to the protamine P2 family. Interacts with TDRP. Post-translationally, proteolytic processing into mature chains is required for histone eviction during spermatogenesis. Transition proteins (TNP1 and TNP2) are required for processing. Expressed in spermatids (at protein level).

It localises to the nucleus. It is found in the chromosome. In terms of biological role, protamines substitute for histones in the chromatin of sperm during the haploid phase of spermatogenesis. They compact sperm DNA into a highly condensed, stable and inactive complex. This is Protamine-2 (Prm2) from Mus musculus (Mouse).